Reading from the N-terminus, the 73-residue chain is Sec-independent protein translocase protein TatA (73 aa).

Residues 1–21 (MGLSWQQLLILLLVVVVIFGT) form a helical membrane-spanning segment.

Belongs to the TatA/E family. In terms of assembly, the Tat system comprises two distinct complexes: a TatABC complex, containing multiple copies of TatA, TatB and TatC subunits, and a separate TatA complex, containing only TatA subunits. Substrates initially bind to the TatABC complex, which probably triggers association of the separate TatA complex to form the active translocon.

It is found in the cell inner membrane. Functionally, part of the twin-arginine translocation (Tat) system that transports large folded proteins containing a characteristic twin-arginine motif in their signal peptide across membranes. TatA could form the protein-conducting channel of the Tat system. This is Sec-independent protein translocase protein TatA from Histophilus somni (strain 129Pt) (Haemophilus somnus).